A 262-amino-acid chain; its full sequence is Cyclin-dependent kinase inhibitor 1 (262 aa).

Positions 140-212 (SDVAEAGSEH…SAQQATRPKI (73 aa)) are disordered. Basic and acidic residues predominate over residues 160–169 (SGRDRERRET). A compositionally biased stretch (low complexity) spans 198–208 (SAATASAQQAT).

This sequence belongs to the CDI family. ICK/KRP subfamily.

This chain is Cyclin-dependent kinase inhibitor 1 (KRP1), found in Oryza sativa subsp. indica (Rice).